The sequence spans 404 residues: Ubiquitin-like modifier-activating enzyme 5 (404 aa).

Residue Ser45 is modified to Phosphoserine. 5 residues coordinate ATP: Gly83, Asp104, Lys127, Asn150, and Asn184. Zn(2+)-binding residues include Cys226 and Cys229. Cys250 serves as the catalytic Glycyl thioester intermediate. The Zn(2+) site is built by Cys303 and Cys308. Positions 334–346 (IIHEDNEWGIELV) match the UFM1-interacting sequence (UIS) motif. Residues 347 to 377 (SEISEEELKKSSGPIPDLPEGIIVAYTVPQK) form a linker region. Phosphoserine occurs at positions 358 and 393. A UFC1-binding sequence (UFC) motif is present at residues 389–404 (DSGESLEDLMAKMKNI).

The protein belongs to the ubiquitin-activating E1 family. UBA5 subfamily. In terms of assembly, homodimer; homodimerization is required for UFM1 activation. Interacts (via UIS motif) with UFM1; binds UFM1 via a trans-binding mechanism in which UFM1 interacts with distinct sites in both subunits of the UBA5 homodimer. Interacts (via C-terminus) with UFC1. Interacts (via UIS motif) with GABARAPL2 and, with lower affinity, with GABARAP and GABARAPL1.

It localises to the cytoplasm. Its subcellular location is the nucleus. It is found in the endoplasmic reticulum membrane. The protein resides in the golgi apparatus. E1-like enzyme which specifically catalyzes the first step in ufmylation. Activates UFM1 by first adenylating its C-terminal glycine residue with ATP, and thereafter linking this residue to the side chain of a cysteine residue in E1, yielding a UFM1-E1 thioester and free AMP. Activates UFM1 via a trans-binding mechanism, in which UFM1 interacts with distinct sites in both subunits of the UBA5 homodimer. Trans-binding also promotes stabilization of the UBA5 homodimer, and enhances ATP-binding. Transfer of UFM1 from UBA5 to the E2-like enzyme UFC1 also takes place using a trans mechanism. Ufmylation plays a key role in various processes, such as ribosome recycling, response to DNA damage, interferon response or reticulophagy (also called ER-phagy). Ufmylation is essential for erythroid differentiation of both megakaryocytes and erythrocytes. In Bos taurus (Bovine), this protein is Ubiquitin-like modifier-activating enzyme 5.